The primary structure comprises 492 residues: Stage IV sporulation protein A (492 aa).

The short motif at 24 to 31 (GAVRTGKS) is the Walker A motif; involved in ATP-binding element. An ATP-binding site is contributed by 24–31 (GAVRTGKS).

Its subcellular location is the cytoplasm. The enzyme catalyses ATP + H2O = ADP + phosphate + H(+). In terms of biological role, ATPase. Has a role at an early stage in the morphogenesis of the spore coat outer layers. Directs the assembly of the coat and exosporium to an area around the forespore. This chain is Stage IV sporulation protein A, found in Bacillus anthracis.